We begin with the raw amino-acid sequence, 328 residues long: D-cysteine desulfhydrase (328 aa).

Lys51 is modified (N6-(pyridoxal phosphate)lysine).

It belongs to the ACC deaminase/D-cysteine desulfhydrase family. In terms of assembly, homodimer. Pyridoxal 5'-phosphate serves as cofactor.

The enzyme catalyses D-cysteine + H2O = hydrogen sulfide + pyruvate + NH4(+) + H(+). In terms of biological role, catalyzes the alpha,beta-elimination reaction of D-cysteine and of several D-cysteine derivatives. It could be a defense mechanism against D-cysteine. In Escherichia coli O6:H1 (strain CFT073 / ATCC 700928 / UPEC), this protein is D-cysteine desulfhydrase.